A 448-amino-acid chain; its full sequence is RuvB-like 2 (448 aa).

ATP is bound at residue 73–80; the sequence is GEPGAGKT.

Belongs to the RuvB family. In terms of assembly, forms homohexameric rings. May form a dodecamer with ruvb-1 made of two stacked hexameric rings. As to expression, expressed in gonadal cells.

The protein resides in the cytoplasm. Its subcellular location is the nucleus. The catalysed reaction is ATP + H2O = ADP + phosphate + H(+). Functionally, possesses single-stranded DNA-stimulated ATPase and ATP-dependent DNA helicase (5' to 3') activity suggesting a role in nuclear processes such as recombination and transcription. May participate in several chromatin remodeling complexes that mediate the ATP-dependent exchange of histones and remodel chromatin by shifting nucleosomes. Involvement in these complexes is likely required for transcriptional activation of selected genes and DNA repair in response to DNA damage. Has a role in gonadal development. Involved in the endoplasmic reticulum (ER)-associated degradation (ERAD) pathway where it negatively regulates expression of ER stress response genes. Specifically, negatively controls the expression of ER homeostasis regulator ckb-2 in a cdc-48.1/2-dependent manner. This chain is RuvB-like 2, found in Caenorhabditis elegans.